A 311-amino-acid polypeptide reads, in one-letter code: L-lactate dehydrogenase (311 aa).

Residues Val12, Asp33, Lys38, Tyr63, and 77–78 (GA) each bind NAD(+). Residues Gln80 and Arg86 each coordinate substrate. NAD(+)-binding positions include Ser99, 116–118 (VTN), and Ser141. Substrate is bound at residue 118 to 121 (NPVD). Position 146–149 (146–149 (DSSR)) interacts with substrate. Beta-D-fructose 1,6-bisphosphate contacts are provided by Arg151 and His166. His173 (proton acceptor) is an active-site residue. The residue at position 219 (Tyr219) is a Phosphotyrosine. Thr228 lines the substrate pocket.

It belongs to the LDH/MDH superfamily. LDH family. As to quaternary structure, homotetramer.

Its subcellular location is the cytoplasm. It carries out the reaction (S)-lactate + NAD(+) = pyruvate + NADH + H(+). It participates in fermentation; pyruvate fermentation to lactate; (S)-lactate from pyruvate: step 1/1. Allosterically activated by fructose 1,6-bisphosphate (FBP). In terms of biological role, catalyzes the conversion of lactate to pyruvate. This is L-lactate dehydrogenase from Thermoanaerobacterium saccharolyticum (strain DSM 8691 / JW/SL-YS485).